We begin with the raw amino-acid sequence, 706 residues long: UvrABC system protein C (706 aa).

In terms of domain architecture, GIY-YIG spans 16 to 95 (VEPGVYRFRD…IKEFDPRFNV (80 aa)). In terms of domain architecture, UVR spans 208-243 (DRLAKDMEQQMTAAAEQLDFERAARLRDDISALKRA). The tract at residues 651 to 706 (APQNGTAPDPAPGTGDPQTPADPHSAATAADIEDDRHATGATGPQMNGSEQQVDRV) is disordered. The span at 692–706 (TGPQMNGSEQQVDRV) shows a compositional bias: polar residues.

It belongs to the UvrC family. As to quaternary structure, interacts with UvrB in an incision complex.

The protein resides in the cytoplasm. Functionally, the UvrABC repair system catalyzes the recognition and processing of DNA lesions. UvrC both incises the 5' and 3' sides of the lesion. The N-terminal half is responsible for the 3' incision and the C-terminal half is responsible for the 5' incision. This chain is UvrABC system protein C, found in Mycolicibacterium smegmatis (strain ATCC 700084 / mc(2)155) (Mycobacterium smegmatis).